Here is a 202-residue protein sequence, read N- to C-terminus: Elongation factor Ts, chloroplastic (202 aa).

The protein belongs to the EF-Ts family.

The protein localises to the plastid. The protein resides in the chloroplast. Associates with the EF-Tu.GDP complex and induces the exchange of GDP to GTP. It remains bound to the aminoacyl-tRNA.EF-Tu.GTP complex up to the GTP hydrolysis stage on the ribosome. In Phaeodactylum tricornutum (strain CCAP 1055/1), this protein is Elongation factor Ts, chloroplastic (tsf).